Here is a 156-residue protein sequence, read N- to C-terminus: Small ribosomal subunit protein uS7 (156 aa).

This sequence belongs to the universal ribosomal protein uS7 family. As to quaternary structure, part of the 30S ribosomal subunit. Contacts proteins S9 and S11.

One of the primary rRNA binding proteins, it binds directly to 16S rRNA where it nucleates assembly of the head domain of the 30S subunit. Is located at the subunit interface close to the decoding center, probably blocks exit of the E-site tRNA. The chain is Small ribosomal subunit protein uS7 from Parvibaculum lavamentivorans (strain DS-1 / DSM 13023 / NCIMB 13966).